Consider the following 176-residue polypeptide: Scytalone dehydratase-like protein AacuK (176 aa).

2 residues coordinate substrate: Tyr-26 and Tyr-46. Active-site residues include His-81 and His-107.

The protein belongs to the scytalone dehydratase family.

The protein operates within secondary metabolite biosynthesis. In terms of biological role, scytalone dehydratase-like protein; part of the gene cluster that mediates the biosynthesis of the tetrahydroxanthone dimer secalonic acid D. The pathway begins with the synthesis of atrochrysone thioester by the polyketide synthase AacuL. The atrochrysone carboxyl ACP thioesterase AacuM then breaks the thioester bond and releases the atrochrysone carboxylic acid from AacuL. Atrochrysone carboxylic acid is decarboxylated by the decarboxylase AacuI, and oxidized by the anthrone oxygenase AacuG to yield emodin. Emodin is then reduced to emodin hydroquinone by a yet unidentified oxidoreductase. A-ring reduction by the short chain dehydrogenase AacuN, dehydration by the scytalone dehydratase-like protein AacuK and probable spontaneous re-oxidation, results in overall deoxygenation to chrysophanol. Baeyer-Villiger oxidation by the Baeyer-Villiger monooxygenase (BVMO) AacuH then yields monodictyphenone. Monodictyphenone is transformed into compounds with the tetrahydroxanthone skeleton via methylesterification by the methyltransferase AacuQ, followed by the action of the flavin-dependent monooxygenase AacuC, the isomerase AacuP, and the short chain dehydrogenase/reductase AacuF or AacuD. AacuF and AacuD should accept the same compound as a substrate but perform the ketoreduction with a different stereoselectivity, thus yielding blennolides B and A, respectively. In the final step of the biosynthesis, the cytochrome P450 monooxygenase AacuE accepts blennolide B and/or blennolide A to conduct the dimerization reaction to furnish the tetrahydroxanthone dimers, secalonic acids D, B, and F. The chain is Scytalone dehydratase-like protein AacuK from Aspergillus aculeatus (strain ATCC 16872 / CBS 172.66 / WB 5094).